Consider the following 146-residue polypeptide: Hemoglobin subunit beta (146 aa).

The residue at position 1 (V1) is an N-acetylvaline. The region spanning 2–146 (HLSGGEKSAV…VAHALGHKYH (145 aa)) is the Globin domain. Phosphothreonine is present on T12. K59 is subject to N6-acetyllysine. H63 lines the heme b pocket. K82 carries the post-translational modification N6-acetyllysine. H92 is a heme b binding site. C93 is modified (S-nitrosocysteine). An N6-acetyllysine modification is found at K144.

This sequence belongs to the globin family. Heterotetramer of two alpha chains and two beta chains. As to expression, red blood cells.

Functionally, involved in oxygen transport from the lung to the various peripheral tissues. This Ornithorhynchus anatinus (Duckbill platypus) protein is Hemoglobin subunit beta (HBB).